A 142-amino-acid chain; its full sequence is Hemoglobin subunit theta-1 (142 aa).

The Globin domain maps to 2 to 142 (ALSAEDRALV…VISALASEYR (141 aa)). Residues histidine 59 and histidine 88 each contribute to the heme b site.

The protein belongs to the globin family.

The chain is Hemoglobin subunit theta-1 (HBQ1) from Pongo pygmaeus (Bornean orangutan).